Consider the following 397-residue polypeptide: Phosphoribulokinase, chloroplastic (397 aa).

A chloroplast-targeting transit peptide spans 1 to 44 (MAVSAYTVPTTSHLGFNQKKQLFFCNKSAYKRVSFSSRPCVITC). C62 and C101 form a disulfide bridge.

This sequence belongs to the phosphoribulokinase family.

It is found in the plastid. It localises to the chloroplast. The catalysed reaction is D-ribulose 5-phosphate + ATP = D-ribulose 1,5-bisphosphate + ADP + H(+). Its pathway is carbohydrate biosynthesis; Calvin cycle. Its activity is regulated as follows. Light regulated via thioredoxin by reversible oxidation/reduction of sulfhydryl/disulfide groups. In Mesembryanthemum crystallinum (Common ice plant), this protein is Phosphoribulokinase, chloroplastic.